A 354-amino-acid chain; its full sequence is Rhodopsin (354 aa).

Residues 1-36 (MNGTEGPYFYIPMVNTTGIVRSPYDYPQYYLVNPAA) are Extracellular-facing. Residues asparagine 2 and asparagine 15 are each glycosylated (N-linked (GlcNAc...) asparagine). The chain crosses the membrane as a helical span at residues 37-61 (YAALGAYMFFLILVGFPINFLTLYV). The Cytoplasmic segment spans residues 62-73 (TIEHKKLRTPLN). Residues 74–96 (YILLNLAVANLFMVFGGFTTTMY) traverse the membrane as a helical segment. Over 97–110 (TSMHGYFVLGRLGC) the chain is Extracellular. A disulfide bond links cysteine 110 and cysteine 187. A helical membrane pass occupies residues 111–133 (NLEGFFATLGGEIALWSLVVLAV). The 'Ionic lock' involved in activated form stabilization motif lies at 134–136 (ERW). Residues 134 to 152 (ERWMVVCKPISNFRFGENH) lie on the Cytoplasmic side of the membrane. A helical transmembrane segment spans residues 153–173 (AIMGLAMTWLMASACAVPPLV). Residues 174–202 (GWSRYIPEGMQCSCGVDYYTRAEGFNNES) are Extracellular-facing. N-linked (GlcNAc...) asparagine glycosylation is present at asparagine 200. The helical transmembrane segment at 203–224 (FVVYMFCCHFMIPLIIVFFCYG) threads the bilayer. Residues 225-252 (RLLCAVKEAAAAQQESETTQRAEREVTR) are Cytoplasmic-facing. The helical transmembrane segment at 253–274 (MVVIMVIAFLVCWLPYASVAWW) threads the bilayer. Residues 275–286 (IFTHQGSEFGPV) are Extracellular-facing. The helical transmembrane segment at 287 to 308 (FMTIPAFFAKSSSIYNPMIYIC) threads the bilayer. Lysine 296 bears the N6-(retinylidene)lysine mark. The Cytoplasmic portion of the chain corresponds to 309–354 (MNKQFRNCMITTLCCGKNPFEEEEGASSTASKTEASSVSSSSVSPA). Residues cysteine 322 and cysteine 323 are each lipidated (S-palmitoyl cysteine). A disordered region spans residues 329–354 (EEEEGASSTASKTEASSVSSSSVSPA). Over residues 334-354 (ASSTASKTEASSVSSSSVSPA) the composition is skewed to low complexity.

This sequence belongs to the G-protein coupled receptor 1 family. Opsin subfamily. In terms of processing, phosphorylated on some or all of the serine and threonine residues present in the C-terminal region. Contains one covalently linked retinal chromophore.

It localises to the membrane. Its subcellular location is the cell projection. It is found in the cilium. The protein localises to the photoreceptor outer segment. Its function is as follows. Photoreceptor required for image-forming vision at low light intensity. While most salt water fish species use retinal as chromophore, most freshwater fish use 3-dehydroretinal, or a mixture of retinal and 3-dehydroretinal. Light-induced isomerization of 11-cis to all-trans retinal triggers a conformational change that activates signaling via G-proteins. Subsequent receptor phosphorylation mediates displacement of the bound G-protein alpha subunit by arrestin and terminates signaling. The polypeptide is Rhodopsin (rho) (Mullus surmuletus (Striped red mullet)).